The following is an 85-amino-acid chain: Elongation factor 1-beta (85 aa).

It belongs to the EF-1-beta/EF-1-delta family.

Promotes the exchange of GDP for GTP in EF-1-alpha/GDP, thus allowing the regeneration of EF-1-alpha/GTP that could then be used to form the ternary complex EF-1-alpha/GTP/AAtRNA. This chain is Elongation factor 1-beta, found in Methanospirillum hungatei JF-1 (strain ATCC 27890 / DSM 864 / NBRC 100397 / JF-1).